A 216-amino-acid polypeptide reads, in one-letter code: DNA gyrase subunit B (216 aa).

The Toprim domain occupies 140–216; that stretch reads SELYLVEGDS…PDKLRYHKII (77 aa).

It belongs to the type II topoisomerase GyrB family. As to quaternary structure, heterotetramer, composed of two GyrA and two GyrB chains. In the heterotetramer, GyrA contains the active site tyrosine that forms a transient covalent intermediate with DNA, while GyrB binds cofactors and catalyzes ATP hydrolysis.

Its subcellular location is the cytoplasm. It catalyses the reaction ATP-dependent breakage, passage and rejoining of double-stranded DNA.. A type II topoisomerase that negatively supercoils closed circular double-stranded (ds) DNA in an ATP-dependent manner to modulate DNA topology and maintain chromosomes in an underwound state. Negative supercoiling favors strand separation, and DNA replication, transcription, recombination and repair, all of which involve strand separation. Also able to catalyze the interconversion of other topological isomers of dsDNA rings, including catenanes and knotted rings. Type II topoisomerases break and join 2 DNA strands simultaneously in an ATP-dependent manner. In Acinetobacter sp. (strain T4), this protein is DNA gyrase subunit B (gyrB).